Reading from the N-terminus, the 388-residue chain is S-adenosylmethionine synthase (388 aa).

Residue histidine 16 participates in ATP binding. Aspartate 18 serves as a coordination point for Mg(2+). Glutamate 44 is a K(+) binding site. L-methionine contacts are provided by glutamate 57 and glutamine 100. Residues 100–110 are flexible loop; sequence QSPDIAQGVDK. Residues 167 to 169, 233 to 234, aspartate 242, 248 to 249, alanine 265, and lysine 269 contribute to the ATP site; these read DAK, RF, and RK. Aspartate 242 is an L-methionine binding site. Lysine 273 lines the L-methionine pocket.

Belongs to the AdoMet synthase family. As to quaternary structure, homotetramer; dimer of dimers. The cofactor is Mg(2+). Requires K(+) as cofactor.

Its subcellular location is the cytoplasm. It catalyses the reaction L-methionine + ATP + H2O = S-adenosyl-L-methionine + phosphate + diphosphate. Its pathway is amino-acid biosynthesis; S-adenosyl-L-methionine biosynthesis; S-adenosyl-L-methionine from L-methionine: step 1/1. Catalyzes the formation of S-adenosylmethionine (AdoMet) from methionine and ATP. The overall synthetic reaction is composed of two sequential steps, AdoMet formation and the subsequent tripolyphosphate hydrolysis which occurs prior to release of AdoMet from the enzyme. The polypeptide is S-adenosylmethionine synthase (Polynucleobacter necessarius subsp. necessarius (strain STIR1)).